A 245-amino-acid polypeptide reads, in one-letter code: 1-(5-phosphoribosyl)-5-[(5-phosphoribosylamino)methylideneamino] imidazole-4-carboxamide isomerase (245 aa).

D7 (proton acceptor) is an active-site residue. D129 acts as the Proton donor in catalysis.

Belongs to the HisA/HisF family.

The protein resides in the cytoplasm. It catalyses the reaction 1-(5-phospho-beta-D-ribosyl)-5-[(5-phospho-beta-D-ribosylamino)methylideneamino]imidazole-4-carboxamide = 5-[(5-phospho-1-deoxy-D-ribulos-1-ylimino)methylamino]-1-(5-phospho-beta-D-ribosyl)imidazole-4-carboxamide. It functions in the pathway amino-acid biosynthesis; L-histidine biosynthesis; L-histidine from 5-phospho-alpha-D-ribose 1-diphosphate: step 4/9. The polypeptide is 1-(5-phosphoribosyl)-5-[(5-phosphoribosylamino)methylideneamino] imidazole-4-carboxamide isomerase (Salmonella agona (strain SL483)).